We begin with the raw amino-acid sequence, 372 residues long: Cytochrome b (372 aa).

Helical transmembrane passes span 25–45, 69–90, 105–125, and 170–190; these read FGSM…FLAI, WIMQ…YIHI, WLSG…GYVL, and FFAL…IHIM. Heme b is bound by residues His75 and His89. Residues His174 and His188 each contribute to the heme b site. Residue His193 coordinates a ubiquinone. 4 helical membrane-spanning segments follow: residues 218-238, 280-300, 312-332, and 339-358; these read YKDM…LSFS, LGGT…PFTH, LSQI…WTAS, and FILI…IMAP.

It belongs to the cytochrome b family. In terms of assembly, the cytochrome bc1 complex contains 3 respiratory subunits (MT-CYB, CYC1 and UQCRFS1), 2 core proteins (UQCRC1 and UQCRC2) and probably 6 low-molecular weight proteins. Heme b serves as cofactor.

It is found in the mitochondrion inner membrane. Its function is as follows. Component of the ubiquinol-cytochrome c reductase complex (complex III or cytochrome b-c1 complex) that is part of the mitochondrial respiratory chain. The b-c1 complex mediates electron transfer from ubiquinol to cytochrome c. Contributes to the generation of a proton gradient across the mitochondrial membrane that is then used for ATP synthesis. The protein is Cytochrome b (MT-CYB) of Hemachatus haemachatus (Rinkhals).